Here is a 448-residue protein sequence, read N- to C-terminus: 3-phosphoshikimate 1-carboxyvinyltransferase (448 aa).

Lys-38, Ser-39, and Arg-43 together coordinate 3-phosphoshikimate. Lys-38 is a phosphoenolpyruvate binding site. Residues Gly-111 and Arg-140 each contribute to the phosphoenolpyruvate site. 3-phosphoshikimate-binding residues include Ser-185, Gln-187, Asp-335, and Lys-362. A phosphoenolpyruvate-binding site is contributed by Gln-187. Asp-335 functions as the Proton acceptor in the catalytic mechanism. Positions 366 and 408 each coordinate phosphoenolpyruvate.

This sequence belongs to the EPSP synthase family. Monomer.

Its subcellular location is the cytoplasm. The enzyme catalyses 3-phosphoshikimate + phosphoenolpyruvate = 5-O-(1-carboxyvinyl)-3-phosphoshikimate + phosphate. It participates in metabolic intermediate biosynthesis; chorismate biosynthesis; chorismate from D-erythrose 4-phosphate and phosphoenolpyruvate: step 6/7. Functionally, catalyzes the transfer of the enolpyruvyl moiety of phosphoenolpyruvate (PEP) to the 5-hydroxyl of shikimate-3-phosphate (S3P) to produce enolpyruvyl shikimate-3-phosphate and inorganic phosphate. The sequence is that of 3-phosphoshikimate 1-carboxyvinyltransferase from Gloeothece citriformis (strain PCC 7424) (Cyanothece sp. (strain PCC 7424)).